A 718-amino-acid polypeptide reads, in one-letter code: Catalase-peroxidase (718 aa).

The tryptophyl-tyrosyl-methioninium (Trp-Tyr) (with M-245) cross-link spans 98–219; that stretch reads WHAAGTYRMG…LAATEMGLIY (122 aa). His99 functions as the Proton acceptor in the catalytic mechanism. A cross-link (tryptophyl-tyrosyl-methioninium (Tyr-Met) (with W-98)) is located at residues 219-245; the sequence is YVNPEGPQASGDPRSAAPFIRATFGNM. Residue His260 coordinates heme b.

Belongs to the peroxidase family. Peroxidase/catalase subfamily. Homodimer or homotetramer. The cofactor is heme b. Post-translationally, formation of the three residue Trp-Tyr-Met cross-link is important for the catalase, but not the peroxidase activity of the enzyme.

The enzyme catalyses H2O2 + AH2 = A + 2 H2O. It carries out the reaction 2 H2O2 = O2 + 2 H2O. Bifunctional enzyme with both catalase and broad-spectrum peroxidase activity. This is Catalase-peroxidase from Acinetobacter baumannii (strain ACICU).